A 109-amino-acid polypeptide reads, in one-letter code: Iron-sulfur cluster assembly protein CyaY (109 aa).

Belongs to the frataxin family.

Its function is as follows. Involved in iron-sulfur (Fe-S) cluster assembly. May act as a regulator of Fe-S biogenesis. The chain is Iron-sulfur cluster assembly protein CyaY from Verminephrobacter eiseniae (strain EF01-2).